A 621-amino-acid polypeptide reads, in one-letter code: MNNDINSSVESLNSACNMQSDTDTAPLLEDGQHASNQGAASSSRGQPQASPRQKMQRSQPVHILRRLQEEDQQLRTASLPAIPNPFPELTGAAPGSPPSVAPSSLPPPPSQPPAKHCGRCEKWIPGENTRGNGKRKIWRWQFPPGFQLSKLTRPGLWTKTTARFSKKQPKNQCPTDTVNPVARMPTSQMEKLRLRKDVKVFSEDGTSKVVEILTDMTARDLCQLLVYKSHCVDDNSWTLVEHHPQLGLERCLEDHEIVVQVESTMPSESKFLFRKNYAKYEFFKNPVNFFPDQMVNWCQQSNGGQAQLLQNFLNTSSCPEIQGFLQVKEVGRKSWKKLYVCLRRSGLYYSTKGTSKEPRHLQLLADLEESSIFYLIAGKKQYNAPNEHGMCIKPNKAKTEMKELRLLCAEDEQIRTCWMTAFRLLKYGMLLYQNYRIPQRKGLPPPFNAPMRSVSENSLVAMDFSGQIGRVIDNPAEAQSAALEEGHAWRKRSTRMNILSSQSPLHPSTLNAVIHRTQHWFHGRISREESHRIIKQQGLVDGLFLLRDSQSNPKAFVLTLCHHQKIKNFQILPCEDDGQTFFTLDDGNTKFSDLIQLVDFYQLNKGVLPCKLKHHCIRVAL.

Composition is skewed to polar residues over residues 1–23 (MNND…SDTD) and 33–59 (HASN…QRSQ). The tract at residues 1 to 118 (MNNDINSSVE…PSQPPAKHCG (118 aa)) is disordered. 2 positions are modified to phosphoserine: serine 50 and serine 96. Positions 95–112 (GSPPSVAPSSLPPPPSQP) are enriched in pro residues. Residues 194 to 278 (LRKDVKVFSE…SKFLFRKNYA (85 aa)) form the Ras-associating domain. The PH domain maps to 318 to 427 (CPEIQGFLQV…WMTAFRLLKY (110 aa)). Serine 455 is subject to Phosphoserine; by MTOR and PKB/AKT1. A phosphoserine mark is found at serine 458 and serine 503. The SH2 domain maps to 520-601 (WFHGRISREE…SDLIQLVDFY (82 aa)).

It belongs to the GRB7/10/14 family. As to quaternary structure, interacts with ligand-activated tyrosine kinase receptors, including FGFR1, INSR, IGF1R, MET and PDGFRB in a phosphotyrosine-dependent manner through the SH2 domain. Poorly binds to the EGFR. Directly interacts with MAP3K14/NIK and is recruited to the EGFR-ERBB2 complex. Interacts with GIGYF1/PERQ1 and GIGYF2/TNRC15. When unphosphorylated, interacts with AKT1 and when phosphorylated with YWHAE/14-3-3 epsilon. Interacts with NEDD4. Interacts with LRP6, thus interfering with the binding of AXIN1 to LRP6. Binds to activated NRAS. Post-translationally, phosphorylated on serine residues upon EGF, FGF and PDGF stimulation. Widely expressed.

The protein localises to the cytoplasm. Its activity is regulated as follows. Phosphorylation by mTORC1 stabilizes and activates GRB10 constituting a feedback pathway by which mTORC1 inhibits INSR-dependent signaling. Its function is as follows. Adapter protein which modulates coupling of a number of cell surface receptor kinases with specific signaling pathways. Binds to, and suppress signals from, activated receptors tyrosine kinases, including the insulin (INSR) and insulin-like growth factor (IGF1R) receptors. The inhibitory effect can be achieved by 2 mechanisms: interference with the signaling pathway and increased receptor degradation. Delays and reduces AKT1 phosphorylation in response to insulin stimulation. Blocks association between INSR and IRS1 and IRS2 and prevents insulin-stimulated IRS1 and IRS2 tyrosine phosphorylation. Recruits NEDD4 to IGF1R, leading to IGF1R ubiquitination, increased internalization and degradation by both the proteasomal and lysosomal pathways. A similar role in the mediation of ubiquitination also has been suggested with INSR. Negatively regulates Wnt signaling by interacting with LRP6 intracellular portion and interfering with the binding of AXIN1 to LRP6. Positive regulator of the KDR/VEGFR-2 signaling pathway. May inhibit NEDD4-mediated degradation of KDR/VEGFR-2. The protein is Growth factor receptor-bound protein 10 (Grb10) of Mus musculus (Mouse).